We begin with the raw amino-acid sequence, 366 residues long: Galactoside alpha-(1,2)-fucosyltransferase 1 (366 aa).

Residues 1 to 8 lie on the Cytoplasmic side of the membrane; the sequence is MWPLSHRH. The chain crosses the membrane as a helical; Signal-anchor for type II membrane protein span at residues 9-25; that stretch reads LCLAFLLVCVLSAISFF. Over 26-366 the chain is Lumenal; that stretch reads LHIHQDSFRH…LSPLWTLAEP (341 aa). 3 N-linked (GlcNAc...) asparagine glycosylation sites follow: asparagine 66, asparagine 302, and asparagine 328.

The protein belongs to the glycosyltransferase 11 family.

It is found in the golgi apparatus. Its subcellular location is the golgi stack membrane. The catalysed reaction is a beta-D-galactosyl-(1-&gt;4)-N-acetyl-beta-D-glucosaminyl derivative + GDP-beta-L-fucose = an alpha-L-Fuc-(1-&gt;2)-beta-D-Gal-(1-&gt;4)-beta-D-GlcNAc derivative + GDP + H(+). It carries out the reaction a ganglioside GA1 + GDP-beta-L-fucose = a ganglioside Fuc-GA1 + GDP + H(+). The enzyme catalyses a beta-D-Gal-(1-&gt;3)-beta-D-GlcNAc-(1-&gt;3)-beta-D-Gal-(1-&gt;4)-beta-D-Glc-(1&lt;-&gt;1')-Cer(d18:1(4E)) + GDP-beta-L-fucose = alpha-L-fucosyl-(1-&gt;2)- beta-D-galactosyl-(1-&gt;3)-N-acetyl-beta-D-glucosaminyl-(1-&gt;3)-beta-D-galactosyl-(1-&gt;4)-beta-D-glucosyl-(1&lt;-&gt;1')-N-acylsphing-4-enine + GDP + H(+). It catalyses the reaction a neolactoside nLc4Cer(d18:1(4E)) + GDP-beta-L-fucose = a neolactoside IV(2)-alpha-Fuc-nLc4Cer(d18:1(4E)) + GDP + H(+). The catalysed reaction is a ganglioside GM1 + GDP-beta-L-fucose = a ganglioside Fuc-GM1 + GDP + H(+). It carries out the reaction beta-D-galactosyl-(1-&gt;3)-N-acetyl-D-galactosamine + GDP-beta-L-fucose = alpha-L-fucosyl-(1-&gt;2)-beta-D-galactosyl-(1-&gt;3)-N-acetyl-D-galactosamine + GDP + H(+). It functions in the pathway protein modification; protein glycosylation. Its function is as follows. Catalyzes the transfer of L-fucose, from a guanosine diphosphate-beta-L-fucose, to the terminal galactose residue of glycoconjugates through an alpha(1,2) linkage leading to H antigen synthesis that is an intermediate substrate in the synthesis of ABO blood group antigens. H antigen is essential for maturation of the glomerular layer of the main olfactory bulb, in cell migration and early cell-cell contacts during tumor associated angiogenesis. Preferentially fucosylates soluble lactose and to a lesser extent fucosylates glycolipids gangliosides GA1 and GM1a. This is Galactoside alpha-(1,2)-fucosyltransferase 1 from Plecturocebus brunneus (Brown titi monkey).